The following is a 403-amino-acid chain: Large ribosomal subunit protein uL3 (403 aa).

The disordered stretch occupies residues 1 to 37; that stretch reads MSHRKFSAPRHGSLGFLPRKRSSRHRGKVKSFPKDDP. Serine 13 carries the post-translational modification Phosphoserine. A compositionally biased stretch (basic residues) spans 18 to 31; sequence PRKRSSRHRGKVKS. Lysine 39 is covalently cross-linked (Glycyl lysine isopeptide (Lys-Gly) (interchain with G-Cter in SUMO2)). Lysine 136 carries the post-translational modification N6-acetyllysine. Residues lysine 224 and lysine 226 each participate in a glycyl lysine isopeptide (Lys-Gly) (interchain with G-Cter in SUMO2) cross-link. Histidine 245 is modified (tele-methylhistidine). Residues lysine 286 and lysine 294 each carry the N6-acetyllysine; alternate modification. Lysine 286 is covalently cross-linked (Glycyl lysine isopeptide (Lys-Gly) (interchain with G-Cter in SUMO2); alternate). Lysine 294 is covalently cross-linked (Glycyl lysine isopeptide (Lys-Gly) (interchain with G-Cter in SUMO1); alternate). Serine 304 bears the Phosphoserine mark. Residue lysine 366 is modified to N6-acetyllysine; alternate. A Glycyl lysine isopeptide (Lys-Gly) (interchain with G-Cter in SUMO2); alternate cross-link involves residue lysine 366. N6-acetyllysine is present on lysine 373. Glycyl lysine isopeptide (Lys-Gly) (interchain with G-Cter in SUMO2) cross-links involve residues lysine 386, lysine 393, and lysine 399.

The protein belongs to the universal ribosomal protein uL3 family. Component of the large ribosomal subunit. Interacts with DHX33. In terms of processing, constitutively monomethylated at His-245 by METTL18. Methylation at His-245 regulates translation elongation by slowing ribosome traversal on tyrosine codons: slower elongation provides enough time for proper folding of synthesized proteins and prevents cellular aggregation of tyrosine-rich proteins It is not required for incorporation of RPL3 into ribosomes.

It is found in the nucleus. The protein resides in the nucleolus. It localises to the cytoplasm. Its function is as follows. Component of the large ribosomal subunit. The ribosome is a large ribonucleoprotein complex responsible for the synthesis of proteins in the cell. This Macaca fascicularis (Crab-eating macaque) protein is Large ribosomal subunit protein uL3 (RPL3).